Consider the following 216-residue polypeptide: Pyrophosphatase PpaX (216 aa).

Asp-9 (nucleophile) is an active-site residue.

The protein belongs to the HAD-like hydrolase superfamily. PpaX family. The cofactor is Mg(2+).

The enzyme catalyses diphosphate + H2O = 2 phosphate + H(+). Its function is as follows. Hydrolyzes pyrophosphate formed during P-Ser-HPr dephosphorylation by HPrK/P. Might play a role in controlling the intracellular pyrophosphate pool. The chain is Pyrophosphatase PpaX from Bacillus cereus (strain G9842).